The chain runs to 159 residues: Ribosome maturation factor RimP (159 aa).

This sequence belongs to the RimP family.

The protein localises to the cytoplasm. Functionally, required for maturation of 30S ribosomal subunits. The chain is Ribosome maturation factor RimP from Geotalea daltonii (strain DSM 22248 / JCM 15807 / FRC-32) (Geobacter daltonii).